Consider the following 314-residue polypeptide: Mevalonate kinase (314 aa).

103-109 contacts ATP; it reads GLGTSAA. Asp150 acts as the Proton acceptor in catalysis.

Belongs to the GHMP kinase family. Mevalonate kinase subfamily. In terms of assembly, homodimer. Mg(2+) serves as cofactor.

The protein localises to the cytoplasm. The enzyme catalyses (R)-mevalonate + ATP = (R)-5-phosphomevalonate + ADP + H(+). It functions in the pathway isoprenoid biosynthesis; isopentenyl diphosphate biosynthesis via mevalonate pathway; isopentenyl diphosphate from (R)-mevalonate: step 1/3. Functionally, catalyzes the phosphorylation of (R)-mevalonate (MVA) to (R)-mevalonate 5-phosphate (MVAP). Functions in the mevalonate (MVA) pathway leading to isopentenyl diphosphate (IPP), a key precursor for the biosynthesis of isoprenoid compounds such as archaeal membrane lipids. The polypeptide is Mevalonate kinase (Saccharolobus solfataricus (strain ATCC 35092 / DSM 1617 / JCM 11322 / P2) (Sulfolobus solfataricus)).